Here is a 222-residue protein sequence, read N- to C-terminus: Pyridoxine/pyridoxamine 5'-phosphate oxidase (222 aa).

Residues 14–17 (RRNY) and K71 contribute to the substrate site. FMN contacts are provided by residues 66–71 (RTVLLK), 81–82 (FT), R87, K88, and Q110. The substrate site is built by Y128, R132, and S136. Residues 145-146 (QS) and W190 contribute to the FMN site. 196–198 (RLN) is a binding site for substrate. Residue R200 participates in FMN binding.

It belongs to the pyridoxamine 5'-phosphate oxidase family. As to quaternary structure, homodimer. It depends on FMN as a cofactor.

The catalysed reaction is pyridoxamine 5'-phosphate + O2 + H2O = pyridoxal 5'-phosphate + H2O2 + NH4(+). It carries out the reaction pyridoxine 5'-phosphate + O2 = pyridoxal 5'-phosphate + H2O2. The protein operates within cofactor metabolism; pyridoxal 5'-phosphate salvage; pyridoxal 5'-phosphate from pyridoxamine 5'-phosphate: step 1/1. It functions in the pathway cofactor metabolism; pyridoxal 5'-phosphate salvage; pyridoxal 5'-phosphate from pyridoxine 5'-phosphate: step 1/1. In terms of biological role, catalyzes the oxidation of either pyridoxine 5'-phosphate (PNP) or pyridoxamine 5'-phosphate (PMP) into pyridoxal 5'-phosphate (PLP). This Prochlorococcus marinus (strain MIT 9303) protein is Pyridoxine/pyridoxamine 5'-phosphate oxidase.